The sequence spans 485 residues: Glutamyl-tRNA(Gln) amidotransferase subunit A (485 aa).

Catalysis depends on charge relay system residues Lys79 and Ser154. The Acyl-ester intermediate role is filled by Ser178.

Belongs to the amidase family. GatA subfamily. Heterotrimer of A, B and C subunits.

It catalyses the reaction L-glutamyl-tRNA(Gln) + L-glutamine + ATP + H2O = L-glutaminyl-tRNA(Gln) + L-glutamate + ADP + phosphate + H(+). Allows the formation of correctly charged Gln-tRNA(Gln) through the transamidation of misacylated Glu-tRNA(Gln) in organisms which lack glutaminyl-tRNA synthetase. The reaction takes place in the presence of glutamine and ATP through an activated gamma-phospho-Glu-tRNA(Gln). This is Glutamyl-tRNA(Gln) amidotransferase subunit A from Staphylococcus epidermidis (strain ATCC 35984 / DSM 28319 / BCRC 17069 / CCUG 31568 / BM 3577 / RP62A).